The chain runs to 212 residues: Protein-L-isoaspartate O-methyltransferase (212 aa).

The active site involves S60.

It belongs to the methyltransferase superfamily. L-isoaspartyl/D-aspartyl protein methyltransferase family.

It is found in the cytoplasm. It catalyses the reaction [protein]-L-isoaspartate + S-adenosyl-L-methionine = [protein]-L-isoaspartate alpha-methyl ester + S-adenosyl-L-homocysteine. Catalyzes the methyl esterification of L-isoaspartyl residues in peptides and proteins that result from spontaneous decomposition of normal L-aspartyl and L-asparaginyl residues. It plays a role in the repair and/or degradation of damaged proteins. This is Protein-L-isoaspartate O-methyltransferase from Pseudomonas putida (strain ATCC 700007 / DSM 6899 / JCM 31910 / BCRC 17059 / LMG 24140 / F1).